A 183-amino-acid polypeptide reads, in one-letter code: tRNA-splicing endonuclease (183 aa).

Residues tyrosine 120, histidine 128, and lysine 159 contribute to the active site.

Belongs to the tRNA-intron endonuclease family. Archaeal short subfamily. As to quaternary structure, homotetramer; although the tetramer contains four active sites, only two participate in the cleavage. Therefore, it should be considered as a dimer of dimers.

It carries out the reaction pretRNA = a 3'-half-tRNA molecule with a 5'-OH end + a 5'-half-tRNA molecule with a 2',3'-cyclic phosphate end + an intron with a 2',3'-cyclic phosphate and a 5'-hydroxyl terminus.. Functionally, endonuclease that removes tRNA introns. Cleaves pre-tRNA at the 5'- and 3'-splice sites to release the intron. The products are an intron and two tRNA half-molecules bearing 2',3' cyclic phosphate and 5'-OH termini. Recognizes a pseudosymmetric substrate in which 2 bulged loops of 3 bases are separated by a stem of 4 bp. The polypeptide is tRNA-splicing endonuclease (Pyrobaculum aerophilum (strain ATCC 51768 / DSM 7523 / JCM 9630 / CIP 104966 / NBRC 100827 / IM2)).